Consider the following 417-residue polypeptide: Serine hydroxymethyltransferase (417 aa).

Residues leucine 121 and 125 to 127 contribute to the (6S)-5,6,7,8-tetrahydrofolate site; that span reads GHL. Lysine 229 is subject to N6-(pyridoxal phosphate)lysine. 355–357 contributes to the (6S)-5,6,7,8-tetrahydrofolate binding site; the sequence is SPF.

Belongs to the SHMT family. Homodimer. Requires pyridoxal 5'-phosphate as cofactor.

It localises to the cytoplasm. The enzyme catalyses (6R)-5,10-methylene-5,6,7,8-tetrahydrofolate + glycine + H2O = (6S)-5,6,7,8-tetrahydrofolate + L-serine. The protein operates within one-carbon metabolism; tetrahydrofolate interconversion. It functions in the pathway amino-acid biosynthesis; glycine biosynthesis; glycine from L-serine: step 1/1. Its function is as follows. Catalyzes the reversible interconversion of serine and glycine with tetrahydrofolate (THF) serving as the one-carbon carrier. This reaction serves as the major source of one-carbon groups required for the biosynthesis of purines, thymidylate, methionine, and other important biomolecules. Also exhibits THF-independent aldolase activity toward beta-hydroxyamino acids, producing glycine and aldehydes, via a retro-aldol mechanism. The protein is Serine hydroxymethyltransferase of Shewanella sp. (strain ANA-3).